Consider the following 145-residue polypeptide: Large-conductance mechanosensitive channel (145 aa).

2 consecutive transmembrane segments (helical) span residues 16 to 36 (VVDL…VTSF) and 83 to 103 (GVFI…FMVI).

It belongs to the MscL family. Homopentamer.

The protein localises to the cell inner membrane. In terms of biological role, channel that opens in response to stretch forces in the membrane lipid bilayer. May participate in the regulation of osmotic pressure changes within the cell. The chain is Large-conductance mechanosensitive channel from Geobacter metallireducens (strain ATCC 53774 / DSM 7210 / GS-15).